The chain runs to 281 residues: Diphthine methyl ester synthase (281 aa).

S-adenosyl-L-methionine contacts are provided by residues leucine 9, aspartate 84, glycine 87, 112-113 (SI), and leucine 163. A Phosphoserine modification is found at serine 171. S-adenosyl-L-methionine contacts are provided by valine 225 and histidine 250.

The protein belongs to the diphthine synthase family.

The catalysed reaction is 2-[(3S)-amino-3-carboxypropyl]-L-histidyl-[translation elongation factor 2] + 4 S-adenosyl-L-methionine = diphthine methyl ester-[translation elongation factor 2] + 4 S-adenosyl-L-homocysteine + 3 H(+). It functions in the pathway protein modification; peptidyl-diphthamide biosynthesis. S-adenosyl-L-methionine-dependent methyltransferase that catalyzes four methylations of the modified target histidine residue in translation elongation factor 2 (EF-2), to form an intermediate called diphthine methyl ester. The four successive methylation reactions represent the second step of diphthamide biosynthesis. This chain is Diphthine methyl ester synthase (Dph5), found in Mus musculus (Mouse).